Consider the following 483-residue polypeptide: WAS/WASL-interacting protein family member 3 (483 aa).

Positions 1–29 are enriched in pro residues; sequence MPVPPPPPPPLPPPPPPLGAPPPPPPSAP. Positions 1–414 are disordered; that stretch reads MPVPPPPPPP…GGQLRNGSLH (414 aa). 3 short sequence motifs (profilin-binding motif) span residues 3 to 8, 11 to 16, and 20 to 25; these read VPPPPP, LPPPPP, and APPPPP. The WH2 domain occupies 45-62; sequence GRSALLADIQQGTRLRKV. An Asymmetric dimethylarginine modification is found at arginine 46. The short motif at 58-61 is the RLRK element; the sequence is RLRK. Polar residues-rich tracts occupy residues 63 to 78 and 87 to 96; these read TQIN…SSKG and ANTRGASTPP. Serine 149 carries the post-translational modification Phosphoserine. The span at 166–192 shows a compositional bias: pro residues; the sequence is PPRPNVPAPPPPTPPPPPPPLPPPLPS. Phosphoserine is present on serine 202. Pro residues-rich tracts occupy residues 215–239 and 256–271; these read VAPP…PLPP and HLPP…PPCG. The span at 277–288 shows a compositional bias: low complexity; sequence AEPASPAQDAQE. Positions 289-298 are enriched in pro residues; sequence PPAPPPPLPP. Low complexity-rich tracts occupy residues 299 to 308 and 331 to 345; these read YASCSPRASL and PSFQ…AQAL. Serine 383 is subject to Phosphoserine. The span at 393 to 404 shows a compositional bias: low complexity; that stretch reads QQATAWTPTQQP. The WASP-binding motif motif lies at 424–448; that stretch reads TFHSVEDFPPPDEYKPCQKIYPSKI. Residues 461–483 form a disordered region; sequence EAVGQSSDDIKGRNSQLSLKTLR. The segment covering 473–483 has biased composition (polar residues); sequence RNSQLSLKTLR.

The protein belongs to the verprolin family. Interacts with WASL, and monomeric and filamentous actin.

It localises to the cytoplasm. Its function is as follows. May be a regulator of cytoskeletal organization. May have a role in spermatogenesis. The protein is WAS/WASL-interacting protein family member 3 (WIPF3) of Homo sapiens (Human).